The sequence spans 348 residues: Farnesoic acid carboxyl-O-methyltransferase (348 aa).

S-adenosyl-L-methionine is bound at residue Y16. Residues Y16 and 19–23 (HSKYQ) each bind substrate. S-adenosyl-L-methionine contacts are provided by residues G57, 57-58 (GC), N63, 94-97 (FNDS), 123-125 (SFF), and 140-142 (SYS). Position 141–145 (141–145 (YSLHF)) interacts with substrate. Positions 162, 247, and 249 each coordinate Mg(2+).

Belongs to the methyltransferase superfamily. SABATH family. In terms of assembly, homodimer. Mg(2+) is required as a cofactor. In terms of tissue distribution, mostly expressed in leaves and, at very low levels, in roots, stems, flowers and siliques.

It catalyses the reaction (2E,6E)-farnesoate + S-adenosyl-L-methionine = methyl (2E,6E)-farnesoate + S-adenosyl-L-homocysteine. The catalysed reaction is juvenile hormone III carboxylate + S-adenosyl-L-methionine = juvenile hormone III + S-adenosyl-L-homocysteine. The protein operates within sesquiterpene biosynthesis. Activated by Mn(2+) ions. Strongly inhibited by Cu(2+), Zn(2+), Fe(3+) and Fe(2+) ions. Moderately inhibited by Na(+) and Ca(2+) ions. Rapidly degraded at temperatures above 40 degrees Celsius. May catalyze the production of the insect juvenile hormone methyl farnesoate (MeFA) to trigger defense against insect herbivory. The chain is Farnesoic acid carboxyl-O-methyltransferase from Arabidopsis thaliana (Mouse-ear cress).